Here is a 420-residue protein sequence, read N- to C-terminus: Structure-specific endonuclease subunit SLX1 homolog (420 aa).

Residues 19–106 enclose the GIY-YIG domain; sequence SSDNTYPWQN…QHPLKSRRLR (88 aa). Disordered stretches follow at residues 237 to 306 and 311 to 330; these read SVEE…AAVN and DDSA…DDVA. The segment covering 247–266 has biased composition (low complexity); that stretch reads PSSCSVPPSTGSSAAPTPGA. The span at 279–301 shows a compositional bias: basic and acidic residues; that stretch reads VDPRLDSDDRDDNHQFESPDNHE. Residues 311-327 are compositionally biased toward acidic residues; the sequence is DDSADDGTTDGNEDGPD. Residues 348-405 form an SLX1-type zinc finger; it reads CGHCHQSVYQELCIVCLNATCTYRAHLLCAAQAAVHPLGQSSPSETRLVPLRHSCPRC.

Belongs to the SLX1 family. Forms a heterodimer with a member of the SLX4 family. It depends on a divalent metal cation as a cofactor.

It localises to the nucleus. Catalytic subunit of a heterodimeric structure-specific endonuclease that resolves DNA secondary structures generated during DNA repair and recombination. Has endonuclease activity towards branched DNA substrates, introducing single-strand cuts in duplex DNA close to junctions with ss-DNA. This chain is Structure-specific endonuclease subunit SLX1 homolog, found in Monosiga brevicollis (Choanoflagellate).